Here is a 216-residue protein sequence, read N- to C-terminus: Sporozoite antigen (216 aa).

The interval 194–216 (QQQQPSSYGAPPASSQQPSGFFW) is disordered.

The chain is Sporozoite antigen from Eimeria tenella (Coccidian parasite).